Here is a 339-residue protein sequence, read N- to C-terminus: Adenylosuccinate synthetase (339 aa).

GTP contacts are provided by residues 12 to 18 (GDEGKGS) and 42 to 44 (GHS). The active-site Proton acceptor is the D13. Mg(2+) is bound by residues D13 and G42. Residues 13-16 (DEGK), 40-43 (NAGH), T127, R141, Q179, T194, and R256 contribute to the IMP site. Residue H43 is the Proton donor of the active site. 252 to 258 (TVTGRRR) contacts substrate. GTP-binding positions include R258, 284 to 286 (MLD), and 324 to 326 (KTG).

Belongs to the adenylosuccinate synthetase family. In terms of assembly, homodimer. It depends on Mg(2+) as a cofactor.

The protein localises to the cytoplasm. It carries out the reaction IMP + L-aspartate + GTP = N(6)-(1,2-dicarboxyethyl)-AMP + GDP + phosphate + 2 H(+). It participates in purine metabolism; AMP biosynthesis via de novo pathway; AMP from IMP: step 1/2. Functionally, plays an important role in the de novo pathway of purine nucleotide biosynthesis. Catalyzes the first committed step in the biosynthesis of AMP from IMP. The polypeptide is Adenylosuccinate synthetase (Thermococcus sibiricus (strain DSM 12597 / MM 739)).